A 542-amino-acid chain; its full sequence is Chaperonin GroEL (542 aa).

Residues 29-32, Lys50, 86-90, Gly413, 477-479, and Asp493 each bind ATP; these read TLGP, DGTTT, and NAA.

The protein belongs to the chaperonin (HSP60) family. Forms a cylinder of 14 subunits composed of two heptameric rings stacked back-to-back. Interacts with the co-chaperonin GroES.

It is found in the cytoplasm. The catalysed reaction is ATP + H2O + a folded polypeptide = ADP + phosphate + an unfolded polypeptide.. Its function is as follows. Together with its co-chaperonin GroES, plays an essential role in assisting protein folding. The GroEL-GroES system forms a nano-cage that allows encapsulation of the non-native substrate proteins and provides a physical environment optimized to promote and accelerate protein folding. In Solibacter usitatus (strain Ellin6076), this protein is Chaperonin GroEL.